A 560-amino-acid polypeptide reads, in one-letter code: Dihydroxy-acid dehydratase (560 aa).

Cys-52 lines the [2Fe-2S] cluster pocket. Asp-84 contacts Mg(2+). Position 125 (Cys-125) interacts with [2Fe-2S] cluster. Positions 126 and 127 each coordinate Mg(2+). Position 127 is an N6-carboxylysine (Lys-127). Cys-197 lines the [2Fe-2S] cluster pocket. Glu-448 contacts Mg(2+). Ser-474 serves as the catalytic Proton acceptor.

The protein belongs to the IlvD/Edd family. As to quaternary structure, homodimer. The cofactor is [2Fe-2S] cluster. Requires Mg(2+) as cofactor.

It carries out the reaction (2R)-2,3-dihydroxy-3-methylbutanoate = 3-methyl-2-oxobutanoate + H2O. The catalysed reaction is (2R,3R)-2,3-dihydroxy-3-methylpentanoate = (S)-3-methyl-2-oxopentanoate + H2O. It participates in amino-acid biosynthesis; L-isoleucine biosynthesis; L-isoleucine from 2-oxobutanoate: step 3/4. It functions in the pathway amino-acid biosynthesis; L-valine biosynthesis; L-valine from pyruvate: step 3/4. Functionally, functions in the biosynthesis of branched-chain amino acids. Catalyzes the dehydration of (2R,3R)-2,3-dihydroxy-3-methylpentanoate (2,3-dihydroxy-3-methylvalerate) into 2-oxo-3-methylpentanoate (2-oxo-3-methylvalerate) and of (2R)-2,3-dihydroxy-3-methylbutanoate (2,3-dihydroxyisovalerate) into 2-oxo-3-methylbutanoate (2-oxoisovalerate), the penultimate precursor to L-isoleucine and L-valine, respectively. The protein is Dihydroxy-acid dehydratase of Leptospira borgpetersenii serovar Hardjo-bovis (strain JB197).